Here is a 292-residue protein sequence, read N- to C-terminus: ATP synthase gamma chain (292 aa).

This sequence belongs to the ATPase gamma chain family. F-type ATPases have 2 components, CF(1) - the catalytic core - and CF(0) - the membrane proton channel. CF(1) has five subunits: alpha(3), beta(3), gamma(1), delta(1), epsilon(1). CF(0) has three main subunits: a, b and c.

It is found in the cell inner membrane. Functionally, produces ATP from ADP in the presence of a proton gradient across the membrane. The gamma chain is believed to be important in regulating ATPase activity and the flow of protons through the CF(0) complex. This Maridesulfovibrio salexigens (strain ATCC 14822 / DSM 2638 / NCIMB 8403 / VKM B-1763) (Desulfovibrio salexigens) protein is ATP synthase gamma chain.